We begin with the raw amino-acid sequence, 759 residues long: LIM domain and actin-binding protein 1 (759 aa).

Met1 is subject to N-acetylmethionine. A phosphoserine mark is found at Ser4, Ser15, and Ser55. The disordered stretch occupies residues 78 to 131; that stretch reads NPGLGAESHTDSLRNSSTEIRHRADHPPAEVTSHAASGAKADQEEQIHPRSRLR. Residues 96-105 are compositionally biased toward basic and acidic residues; sequence EIRHRADHPP. A Phosphoserine modification is found at Ser132. A compositionally biased stretch (basic and acidic residues) spans 146–177; the sequence is KDGEDLKDHSTESKKMENCLGESRHEVEKSEI. Positions 146–182 are disordered; that stretch reads KDGEDLKDHSTESKKMENCLGESRHEVEKSEISENTD. The Required for interaction with NPC1L1 signature appears at 164-166; sequence CLG. Ala183 and Ser225 each carry phosphoserine. Disordered regions lie at residues 211-264 and 323-381; these read ILRA…RLSE and EKIS…AMKK. Phosphotyrosine is present on Tyr229. Ser230 and Ser242 each carry phosphoserine. Over residues 247–258 the composition is skewed to basic and acidic residues; sequence DSEKNESRRNLE. Ser263, Ser343, Ser350, Ser362, Ser365, Ser369, and Ser374 each carry phosphoserine. Over residues 362-376 the composition is skewed to low complexity; the sequence is SPDSRASSLSESSPP. The LIM zinc-binding domain maps to 388–448; sequence ETCVECQKTV…KPHFNQLFKS (61 aa). The residue at position 439 (Lys439) is an N6-succinyllysine. Position 490 is a phosphoserine (Ser490). A required for interaction with MYO5B region spans residues 493 to 513; that stretch reads VEDAPIAKVGVLAASMEAKAS. The segment at 509-709 is disordered; the sequence is EAKASSQQEK…QEPKSLNWSS (201 aa). 2 stretches are compositionally biased toward basic and acidic residues: residues 516–527 and 556–567; these read QEKEDKPAETKK and WPPEDEISKPEV. A compositionally biased stretch (polar residues) spans 595–607; the sequence is ASFQSTSVKSPKT. A phosphoserine mark is found at Ser601, Ser604, Ser609, and Ser617. Over residues 644-655 the composition is skewed to polar residues; it reads KNGNVGKTTWQN. Residues 656-673 are compositionally biased toward basic and acidic residues; that stretch reads KESKGETGKRSKEGHSLE. The segment covering 674-691 has biased composition (acidic residues); the sequence is MENENLVENGADSDEDDN. A phosphoserine mark is found at Ser686, Ser692, Ser698, Ser726, and Ser741. Residues 693-709 show a composition bias toward polar residues; it reads FLKQQSPQEPKSLNWSS.

Interacts with NPC1L1; bridges NPC1L1 with MYO5B. Interacts with MYO5B; bridges NPC1L1 with MYO5B. Interacts with PXN; this complex stabilizes actin dynamics. Interacts with F-actin and G-actin. Interacts with LUZP1 (via C-terminus); both proteins restrict ciliation and may work together to regulate this process. Binds RAB40B (GTP-bound); interaction influences LIMA1 subcellular localization in lamellipodia during cell migration. Ubiquitinated by the ECS(RAB40B) complex leading to its degradation. In terms of processing, phosphorylation of the C-terminal region by MAPK1/MAPK3 reduces its association with F-actin and contributes to actin filament reorganization and enhances cell motility. Highly expressed in placenta, kidney, pancreas, prostate, ovary, spleen and heart. Also detected in lung, liver, brain, skeletal muscle, thymus, testis and intestine. Not detected in leukocytes. Isoform Beta expressed generally at very low levels. Isoform Alpha abundant in epithelial cells from mammary gland, prostate and in normal oral keratinocytes. Low levels in aortic endothelial cells and dermal fibroblasts. Not detectable in myocardium.

It localises to the cytoplasm. The protein resides in the cell junction. The protein localises to the focal adhesion. It is found in the cytoskeleton. Its subcellular location is the stress fiber. It localises to the cell membrane. The protein resides in the cell projection. The protein localises to the ruffle. It is found in the lamellipodium. Its function is as follows. Actin-binding protein involved in actin cytoskeleton regulation and dynamics. Increases the number and size of actin stress fibers and inhibits membrane ruffling. Inhibits actin filament depolymerization. Bundles actin filaments, delays filament nucleation and reduces formation of branched filaments. Acts as a negative regulator of primary cilium formation. Plays a role in cholesterol homeostasis. Influences plasma cholesterol levels through regulation of intestinal cholesterol absorption. May act as a scaffold protein by regulating NPC1L1 transportation, an essential protein for cholesterol absorption, to the plasma membrane by recruiting MYO5B to NPC1L1, and thus facilitates cholesterol uptake. The polypeptide is LIM domain and actin-binding protein 1 (Homo sapiens (Human)).